The chain runs to 75 residues: Small ribosomal subunit protein bS21A (75 aa).

This sequence belongs to the bacterial ribosomal protein bS21 family.

The protein is Small ribosomal subunit protein bS21A (rpsU1) of Agrobacterium fabrum (strain C58 / ATCC 33970) (Agrobacterium tumefaciens (strain C58)).